The chain runs to 147 residues: Prefoldin subunit alpha (147 aa).

Belongs to the prefoldin alpha subunit family. Heterohexamer of two alpha and four beta subunits.

The protein localises to the cytoplasm. Its function is as follows. Molecular chaperone capable of stabilizing a range of proteins. Seems to fulfill an ATP-independent, HSP70-like function in archaeal de novo protein folding. This is Prefoldin subunit alpha from Saccharolobus islandicus (strain Y.N.15.51 / Yellowstone #2) (Sulfolobus islandicus).